Consider the following 55-residue polypeptide: ATP synthase protein 8 (55 aa).

The chain crosses the membrane as a helical span at residues 7-24 (NPWFFIMIISWLTYSMII). The segment at 34–55 (TNPPARKEPTTNTTTPWNWPWT) is disordered. Low complexity predominate over residues 43–55 (TTNTTTPWNWPWT).

Belongs to the ATPase protein 8 family. As to quaternary structure, F-type ATPases have 2 components, CF(1) - the catalytic core - and CF(0) - the membrane proton channel.

It localises to the mitochondrion membrane. Functionally, mitochondrial membrane ATP synthase (F(1)F(0) ATP synthase or Complex V) produces ATP from ADP in the presence of a proton gradient across the membrane which is generated by electron transport complexes of the respiratory chain. F-type ATPases consist of two structural domains, F(1) - containing the extramembraneous catalytic core and F(0) - containing the membrane proton channel, linked together by a central stalk and a peripheral stalk. During catalysis, ATP synthesis in the catalytic domain of F(1) is coupled via a rotary mechanism of the central stalk subunits to proton translocation. Part of the complex F(0) domain. Minor subunit located with subunit a in the membrane. In Vireo altiloquus (Black-whiskered vireo), this protein is ATP synthase protein 8 (MT-ATP8).